A 660-amino-acid chain; its full sequence is Probable Xaa-Pro aminopeptidase PTRG_10574 (660 aa).

Positions 274, 285, 435, and 476 each coordinate Mn(2+). A disordered region spans residues 641–660; sequence SAGSGSTPLWKPHNKQDKKN.

Belongs to the peptidase M24B family. Requires Mn(2+) as cofactor.

It carries out the reaction Release of any N-terminal amino acid, including proline, that is linked to proline, even from a dipeptide or tripeptide.. Functionally, catalyzes the removal of a penultimate prolyl residue from the N-termini of peptides. The chain is Probable Xaa-Pro aminopeptidase PTRG_10574 from Pyrenophora tritici-repentis (strain Pt-1C-BFP) (Wheat tan spot fungus).